The primary structure comprises 364 residues: Uroporphyrinogen decarboxylase (364 aa).

Residues Arg-49–Arg-53, Asp-98, Tyr-173, Ser-228, and His-341 contribute to the substrate site.

It belongs to the uroporphyrinogen decarboxylase family. In terms of assembly, homodimer.

The protein resides in the cytoplasm. The catalysed reaction is uroporphyrinogen III + 4 H(+) = coproporphyrinogen III + 4 CO2. Its pathway is porphyrin-containing compound metabolism; protoporphyrin-IX biosynthesis; coproporphyrinogen-III from 5-aminolevulinate: step 4/4. Functionally, catalyzes the decarboxylation of four acetate groups of uroporphyrinogen-III to yield coproporphyrinogen-III. This Protochlamydia amoebophila (strain UWE25) protein is Uroporphyrinogen decarboxylase.